The sequence spans 1024 residues: MTMITDSLAVVLQRRDWENPGVTQLNRLAAHPPFASWRNSEEARTDRPSQQLRSLNGEWRFAWFPAPEAVPESWLECDLPEADTVVVPSNWQMHGYDAPIYTNVTYPITVNPPFVPTENPTGCYSLTFNVDESWLQEGQTRIIFDGVNSAFHLWCNGRWVGYGQDSRLPSEFDLSAFLRAGENRLAVMVLRWSDGSYLEDQDMWRMSGIFRDVSLLHKPTTQISDFHVATRFNDDFSRAVLEAEVQMCGELRDYLRVTVSLWQGETQVASGTAPFGGEIIDERGGYADRVTLRLNVENPKLWSAEIPNLYRAVVELHTADGTLIEAEACDVGFREVRIENGLLLLNGKPLLIRGVNRHEHHPLHGQVMDEQTMVQDILLMKQNNFNAVRCSHYPNHPLWYTLCDRYGLYVVDEANIETHGMVPMNRLTDDPRWLPAMSERVTRMVQRDRNHPSVIIWSLGNESGHGANHDALYRWIKSVDPSRPVQYEGGGADTTATDIICPMYARVDEDQPFPAVPKWSIKKWLSLPGETRPLILCEYAHAMGNSLGGFAKYWQAFRQYPRLQGGFVWDWVDQSLIKYDENGNPWSAYGGDFGDTPNDRQFCMNGLVFADRTPHPALTEAKHQQQFFQFRLSGQTIEVTSEYLFRHSDNELLHWMVALDGKPLASGEVPLDVAPQGKQLIELPELPQPESAGQLWLTVRVVQPNATAWSEAGHISAWQQWRLAENLSVTLPAASHAIPHLTTSEMDFCIELGNKRWQFNRQSGFLSQMWIGDKKQLLTPLRDQFTRAPLDNDIGVSEATRIDPNAWVERWKAAGHYQAEAALLQCTADTLADAVLITTAHAWQHQGKTLFISRKTYRIDGSGQMAITVDVEVASDTPHPARIGLNCQLAQVAERVNWLGLGPQENYPDRLTAACFDRWDLPLSDMYTPYVFPSENGLRCGTRELNYGPHQWRGDFQFNISRYSQQQLMETSHRHLLHAEEGTWLNIDGFHMGIGGDDSWSPSVSAEFQLSAGRYHYQLVWCQK.

Substrate is bound by residues asparagine 103 and aspartate 202. Aspartate 202 provides a ligand contact to Na(+). 3 residues coordinate Mg(2+): glutamate 417, histidine 419, and glutamate 462. Substrate contacts are provided by residues glutamate 462 and 538–541 (EYAH). The Proton donor role is filled by glutamate 462. Residue glutamate 538 is the Nucleophile of the active site. Asparagine 598 contacts Mg(2+). Phenylalanine 602 and asparagine 605 together coordinate Na(+). Substrate-binding residues include asparagine 605 and tryptophan 1000.

This sequence belongs to the glycosyl hydrolase 2 family. In terms of assembly, homotetramer. It depends on Mg(2+) as a cofactor. The cofactor is Mn(2+). Requires Na(+) as cofactor.

The catalysed reaction is Hydrolysis of terminal non-reducing beta-D-galactose residues in beta-D-galactosides.. With respect to regulation, inhibited by phenylethyl thio-beta-D-galactoside (PETG), isopropyl thio-beta-D-galactoside (IPTG), L-ribose, D-galactonolactone, lactose and 2-amino-D-galactose. This is Beta-galactosidase (lacZ) from Escherichia coli (strain K12).